Here is a 1071-residue protein sequence, read N- to C-terminus: Carbamoyl phosphate synthase large chain (1071 aa).

Positions 1 to 403 (MPKRTDLKSI…SFQKALRGLE (403 aa)) are carboxyphosphate synthetic domain. The ATP-grasp 1 domain occupies 133–328 (KEAMEKIGLS…IAKVAANWAV (196 aa)). Residues Arg169, Gly175, Gly176, Gln208, Val210, Glu215, Gly241, Val242, His243, Gln285, and Glu299 each coordinate ATP. 3 residues coordinate Mg(2+): Gln285, Glu299, and Asn301. The Mn(2+) site is built by Gln285, Glu299, and Asn301. The segment at 404–548 (TGLCGFNPAR…YSTYEEECES (145 aa)) is oligomerization domain. The carbamoyl phosphate synthetic domain stretch occupies residues 549-930 (RPSDRKKVMI…AYYKAQLGAG (382 aa)). Residues 673–864 (QKVLNDLGLR…LAKVGARCMA (192 aa)) enclose the ATP-grasp 2 domain. ATP contacts are provided by Arg709, Phe748, Leu750, Glu755, Gly780, Ile781, His782, Ser783, Gln823, and Glu835. Mg(2+) contacts are provided by Gln823, Glu835, and Asn837. Gln823, Glu835, and Asn837 together coordinate Mn(2+). The MGS-like domain occupies 931–1071 (ERLNPTGKIF…ELHGRLKNRN (141 aa)). The segment at 931–1071 (ERLNPTGKIF…ELHGRLKNRN (141 aa)) is allosteric domain.

This sequence belongs to the CarB family. In terms of assembly, composed of two chains; the small (or glutamine) chain promotes the hydrolysis of glutamine to ammonia, which is used by the large (or ammonia) chain to synthesize carbamoyl phosphate. Tetramer of heterodimers (alpha,beta)4. Mg(2+) is required as a cofactor. It depends on Mn(2+) as a cofactor.

The enzyme catalyses hydrogencarbonate + L-glutamine + 2 ATP + H2O = carbamoyl phosphate + L-glutamate + 2 ADP + phosphate + 2 H(+). It carries out the reaction hydrogencarbonate + NH4(+) + 2 ATP = carbamoyl phosphate + 2 ADP + phosphate + 2 H(+). The protein operates within amino-acid biosynthesis; L-arginine biosynthesis; carbamoyl phosphate from bicarbonate: step 1/1. It functions in the pathway pyrimidine metabolism; UMP biosynthesis via de novo pathway; (S)-dihydroorotate from bicarbonate: step 1/3. In terms of biological role, large subunit of the glutamine-dependent carbamoyl phosphate synthetase (CPSase). CPSase catalyzes the formation of carbamoyl phosphate from the ammonia moiety of glutamine, carbonate, and phosphate donated by ATP, constituting the first step of 2 biosynthetic pathways, one leading to arginine and/or urea and the other to pyrimidine nucleotides. The large subunit (synthetase) binds the substrates ammonia (free or transferred from glutamine from the small subunit), hydrogencarbonate and ATP and carries out an ATP-coupled ligase reaction, activating hydrogencarbonate by forming carboxy phosphate which reacts with ammonia to form carbamoyl phosphate. The polypeptide is Carbamoyl phosphate synthase large chain (Neisseria gonorrhoeae).